Consider the following 479-residue polypeptide: MTVTTSSPATAEGRTPGIGRVARVIGPVVDVEFAPDELPEIYQALEVDRTIGGETLTLTLEVAQHIGDNTVRAISMQQTDGLVRGAVVRDTGAPISVPVGDATKGHVFNVLGTPLDVDKVDAETRWSIHRQAPAFDQLESKTEMFTTGIKVIDLLAPYVRGGKIGLFGGAGVGKTVIIQEMIRRVAKEFGGVSVFAGVGERTREGNDLFLEMTEAGVIEDTALVFGQMDEPPGTRLRVALGALTMAEYFRDVQKQDVLLFIDNIFRFTQAGSEVSTLLGRMPSAVGYQPTLADEMGVLQERITSTRGHSITSLQAIYVPADDLTDPAPATTFTHLDAQTVLDRSISDLGIYPAVSPLDSNSRILDARYLGQEHYDTAREVQRILQRYKDLQDIIAILGIDELSEEDKILVNRARRIQRFLSQPFFVAEQFTNIPGKFVPLDETIDSFKRLSQGDYDHLPEQAFFMCGGIEDAEKNAENL.

An ATP-binding site is contributed by 168 to 175; sequence GGAGVGKT.

Belongs to the ATPase alpha/beta chains family. F-type ATPases have 2 components, CF(1) - the catalytic core - and CF(0) - the membrane proton channel. CF(1) has five subunits: alpha(3), beta(3), gamma(1), delta(1), epsilon(1). CF(0) has three main subunits: a(1), b(2) and c(9-12). The alpha and beta chains form an alternating ring which encloses part of the gamma chain. CF(1) is attached to CF(0) by a central stalk formed by the gamma and epsilon chains, while a peripheral stalk is formed by the delta and b chains.

It is found in the cell membrane. It catalyses the reaction ATP + H2O + 4 H(+)(in) = ADP + phosphate + 5 H(+)(out). Its function is as follows. Produces ATP from ADP in the presence of a proton gradient across the membrane. The catalytic sites are hosted primarily by the beta subunits. The polypeptide is ATP synthase subunit beta (Frankia alni (strain DSM 45986 / CECT 9034 / ACN14a)).